Here is a 288-residue protein sequence, read N- to C-terminus: Ribosomal protein L11 methyltransferase (288 aa).

S-adenosyl-L-methionine-binding residues include Thr-134, Gly-157, Asp-179, and Asn-224.

The protein belongs to the methyltransferase superfamily. PrmA family.

The protein localises to the cytoplasm. It carries out the reaction L-lysyl-[protein] + 3 S-adenosyl-L-methionine = N(6),N(6),N(6)-trimethyl-L-lysyl-[protein] + 3 S-adenosyl-L-homocysteine + 3 H(+). Methylates ribosomal protein L11. In Caulobacter sp. (strain K31), this protein is Ribosomal protein L11 methyltransferase.